We begin with the raw amino-acid sequence, 227 residues long: 2,3-bisphosphoglycerate-dependent phosphoglycerate mutase (227 aa).

Substrate contacts are provided by residues 7–14, 20–21, arginine 59, 86–89, lysine 97, 113–114, and 182–183; these read RHGQSEWN, TG, ERHY, RR, and GN. Histidine 8 serves as the catalytic Tele-phosphohistidine intermediate. Residue glutamate 86 is the Proton donor/acceptor of the active site.

Belongs to the phosphoglycerate mutase family. BPG-dependent PGAM subfamily. In terms of assembly, homodimer.

The enzyme catalyses (2R)-2-phosphoglycerate = (2R)-3-phosphoglycerate. It functions in the pathway carbohydrate degradation; glycolysis; pyruvate from D-glyceraldehyde 3-phosphate: step 3/5. Its function is as follows. Catalyzes the interconversion of 2-phosphoglycerate and 3-phosphoglycerate. This chain is 2,3-bisphosphoglycerate-dependent phosphoglycerate mutase, found in Neisseria meningitidis serogroup C / serotype 2a (strain ATCC 700532 / DSM 15464 / FAM18).